The sequence spans 482 residues: Glycogen synthase 2 (482 aa).

ADP-alpha-D-glucose is bound at residue K18.

It belongs to the glycosyltransferase 1 family. Bacterial/plant glycogen synthase subfamily.

The catalysed reaction is [(1-&gt;4)-alpha-D-glucosyl](n) + ADP-alpha-D-glucose = [(1-&gt;4)-alpha-D-glucosyl](n+1) + ADP + H(+). It participates in glycan biosynthesis; glycogen biosynthesis. Functionally, synthesizes alpha-1,4-glucan chains using ADP-glucose. The sequence is that of Glycogen synthase 2 from Bradyrhizobium diazoefficiens (strain JCM 10833 / BCRC 13528 / IAM 13628 / NBRC 14792 / USDA 110).